The following is a 660-amino-acid chain: DNA mismatch repair protein MutL (660 aa).

Disordered regions lie at residues 368–426 (PQQT…PTKK) and 439–461 (NREQRESTSQVNEQSHTFRSTQQ). A compositionally biased stretch (low complexity) spans 406–417 (SSSSNSTAPSRS).

Belongs to the DNA mismatch repair MutL/HexB family.

Functionally, this protein is involved in the repair of mismatches in DNA. It is required for dam-dependent methyl-directed DNA mismatch repair. May act as a 'molecular matchmaker', a protein that promotes the formation of a stable complex between two or more DNA-binding proteins in an ATP-dependent manner without itself being part of a final effector complex. This chain is DNA mismatch repair protein MutL, found in Aliivibrio fischeri (strain ATCC 700601 / ES114) (Vibrio fischeri).